Consider the following 3149-residue polypeptide: Large tegument protein deneddylase (3149 aa).

Residues 1–13 (MSNGDWGQSQRTR) show a composition bias toward polar residues. The interval 1 to 30 (MSNGDWGQSQRTRGTGPVRGIRTMDVNAPG) is disordered. Positions 1-268 (MSNGDWGQSQ…YEANGSGFDL (268 aa)) are deubiquitination activity. Residues 41–258 (LGTASCNQAH…MLEHYGVYDF (218 aa)) form the Peptidase C76 domain. Residues C61, D193, and H195 contribute to the active site. The interval 319-341 (PAARYSPAKTNSPPSSPASAAPA) is disordered. Tandem repeats lie at residues 335–339 (PASAA), 340–344 (PASAA), 345–349 (PASAA), 350–354 (PASAA), 355–359 (PASAA), 360–364 (PASAA), 365–369 (PASAA), and 370–374 (PASAA). Residues 335-374 (PASAAPASAAPASAAPASAAPASAAPASAAPASAAPASAA) are 8 X 5 AA repeats of P-A-S-A-A. 8 disordered regions span residues 382–656 (FIPI…GSGL), 901–923 (LLSG…SIYR), 1143–1166 (APIS…TPPL), 1412–1434 (GRKE…RARE), 1644–1677 (PEAT…SALW), 2583–2839 (GLVS…PTAV), 2852–2981 (AAAS…PGAR), and 2995–3019 (QTYT…KCKD). Residues 462 to 483 (LPPPVIPIPHQSPPASPTPHPA) are compositionally biased toward pro residues. Low complexity-rich tracts occupy residues 509–536 (AAPS…TTTL) and 544–564 (QPPQ…QPTP). The segment at 554 to 584 (SPLLPQQQPTPSAAPAPSPLLPQQQPPPSAA) is interaction with inner tegument protein. Residues 565 to 609 (SAAPAPSPLLPQQQPPPSAARAPSPLPPQQQPLPSATPAPPPAQQ) show a composition bias toward pro residues. Low complexity predominate over residues 1143 to 1155 (APISPASPSATPA). Over residues 2592-2603 (SADNTPASSDRL) the composition is skewed to polar residues. Residues 2711–2720 (QPAPQQPPSS) show a composition bias toward pro residues. Polar residues-rich tracts occupy residues 2734-2745 (SPHSTPSTASGS) and 2784-2804 (SAAS…SSQD). The span at 2812-2827 (MQREKKQQGGREEAAE) shows a compositional bias: basic and acidic residues. Residues 2874-2885 (APALGSGLAAPA) are compositionally biased toward low complexity.

Belongs to the herpesviridae large tegument protein family. In terms of assembly, interacts with host CUL1 and CUL4A; these interactions inhibit the E3 ligase activity of cullins. Interacts with inner tegument protein. Interacts with capsid vertex specific component CVC2. Interacts with the major capsid protein/MCP. Interacts with host TRIM25 and YWHAZ.

The protein resides in the virion tegument. The protein localises to the host cytoplasm. Its subcellular location is the host nucleus. The catalysed reaction is Thiol-dependent hydrolysis of ester, thioester, amide, peptide and isopeptide bonds formed by the C-terminal Gly of ubiquitin (a 76-residue protein attached to proteins as an intracellular targeting signal).. Large tegument protein that plays multiple roles in the viral cycle. During viral entry, remains associated with the capsid while most of the tegument is detached and participates in the capsid transport toward the host nucleus. Plays a role in the routing of the capsid at the nuclear pore complex and subsequent uncoating. Within the host nucleus, acts as a deneddylase and promotes the degradation of nuclear CRLs (cullin-RING ubiquitin ligases) and thereby stabilizes nuclear CRL substrates, while cytoplasmic CRLs remain unaffected. These modifications prevent host cell cycle S-phase progression and create a favorable environment allowing efficient viral genome replication. Participates later in the secondary envelopment of capsids. Indeed, plays a linker role for the association of the outer viral tegument to the capsids together with the inner tegument protein. Counteracts host TLR-mediated NF-kappa-B activation through both MYD88 and TICAM1-dependent pathways by interfering with 'Lys-63'- and 'Lys-48'-linked ubiquitination of signaling intermediates such as TRAF6 and IKBKG. Inhibits type I interferon production by forming a tri-molecular complex with host TRIM25 and 14-3-3 thereby promoting TRIM25 autoubiquitination and sequestration of the ligase into inactive protein aggregates. In turn, host RIGI is recruited to the complex but ubiquitination is severely impaired leading to inhibition of the pathway. Also catalyzes the removal of 'Lys-48'- and 'Lys-63'-linked ubiquitin chains on host TBK1 and STING1 suppressing cGAS-STING signaling in addition to the RIGI-MAVS pathway. Inhibits selective autophagy by deubiquitinating host SQSTM1. In turn, decreased SQSTM1 ubiquitination fails to recruit LC3 to SQSTM1-positive aggregates. In the host nucleus, deubiquitinates topoisomerase II subunits TOP2A and TOP2B thereby stabilizing SUMOylated TOP2 which halts the DNA damage response to TOP2-induced double strand DNA breaks and promotes cell survival. The chain is Large tegument protein deneddylase from Epstein-Barr virus (strain B95-8) (HHV-4).